The following is a 361-amino-acid chain: Peptide chain release factor 1 (361 aa).

Gln-237 is subject to N5-methylglutamine. A compositionally biased stretch (basic and acidic residues) spans 286–296 (EKRRSAEESTR). The interval 286–305 (EKRRSAEESTRRNLVSSGDR) is disordered.

It belongs to the prokaryotic/mitochondrial release factor family. Methylated by PrmC. Methylation increases the termination efficiency of RF1.

It is found in the cytoplasm. Its function is as follows. Peptide chain release factor 1 directs the termination of translation in response to the peptide chain termination codons UAG and UAA. The polypeptide is Peptide chain release factor 1 (Shewanella pealeana (strain ATCC 700345 / ANG-SQ1)).